The chain runs to 65 residues: Large ribosomal subunit protein bL35 (65 aa).

This sequence belongs to the bacterial ribosomal protein bL35 family.

In Phytoplasma australiense, this protein is Large ribosomal subunit protein bL35.